We begin with the raw amino-acid sequence, 354 residues long: Guanine nucleotide-binding protein G(i) subunit alpha-1 (354 aa).

Glycine 2 is lipidated: N-myristoyl glycine. Cysteine 3 is lipidated: S-palmitoyl cysteine. Residues arginine 32–phenylalanine 354 enclose the G-alpha domain. The segment at lysine 35–threonine 48 is G1 motif. GTP-binding positions include glutamate 43 to threonine 48, aspartate 150 to serine 151, and leucine 175 to arginine 178. Serine 47 is a Mg(2+) binding site. Residues aspartate 173–threonine 181 form a G2 motif region. Threonine 181 provides a ligand contact to Mg(2+). The interval phenylalanine 196 to arginine 205 is G3 motif. Residues aspartate 200–glutamine 204, asparagine 269–aspartate 272, and alanine 326 each bind GTP. Residues isoleucine 265 to aspartate 272 are G4 motif. Residues threonine 324–threonine 329 are G5 motif.

This sequence belongs to the G-alpha family. G(i/o/t/z) subfamily. Heterotrimeric G proteins are composed of 3 units; alpha, beta and gamma. The alpha chain contains the guanine nucleotide binding site. Part of a spindle orientation complex at least composed of GNAI1, GPSM2 and NUMA1. Identified in complex with the beta subunit GNB1 and the gamma subunit GNG1. Identified in complex with the beta subunit GNB1 and the gamma subunit GNG2. Component of the TAS2R14-GNAI1 complex, consisting of TAS2R14, GNAI1, GNB1 and GNG2; within the complex interacts with TAS2R14; this complex plays a role in the perception of bitterness. GTP binding causes dissociation of the heterotrimer, liberating the individual subunits so that they can interact with downstream effector proteins. Interacts (GDP-bound form) with GPSM1; this inhibits guanine nucleotide exchange and GTP binding. Interacts (GDP-bound form) with GPSM2 (via GoLoco domains); this inhibits guanine nucleotide exchange. Interacts with RGS10; this strongly enhances GTP hydrolysis. Interacts with RGS1 and RGS16; this strongly enhances GTPase activity. Interacts with RGS4. Interacts with RGS12. Interacts (via active GTP- or inactive GDP-bound forms) with RGS14 (via RGS and GoLoco domains). Interacts with RGS3, RGS6, RGS7, RGS8, RGS17, RGS18 and RGS20 (in vitro). Interacts (GDP-bound form) with RIC8A (via C-terminus); promoting GNAI1 folding and association with the plasma membrane. Interacts (inactive GDP-bound form) with NUCB1 (via GBA motif); the interaction leads to activation of GNAI1. Interacts (inactive GDP-bound form) with CCDC88C/DAPLE (via GBA motif); the interaction leads to activation of GNAI1. Interacts (inactive GDP-bound form) with CCDC8A/GIV (via GBA motif). Interacts with GPR15. Post-translationally, myristoylation at Gly-2 is required for membrane anchoring before palmitoylation. Palmitoylation at Cys-3 varies with membrane lipid composition.

Its subcellular location is the nucleus. It is found in the cytoplasm. The protein localises to the cell membrane. The protein resides in the cytoskeleton. It localises to the microtubule organizing center. Its subcellular location is the centrosome. It is found in the cell cortex. The protein localises to the membrane. Its function is as follows. Guanine nucleotide-binding proteins (G proteins) function as transducers downstream of G protein-coupled receptors (GPCRs) in numerous signaling cascades. The alpha chain contains the guanine nucleotide binding site and alternates between an active, GTP-bound state and an inactive, GDP-bound state. Signaling by an activated GPCR promotes GDP release and GTP binding. The alpha subunit has a low GTPase activity that converts bound GTP to GDP, thereby terminating the signal. Both GDP release and GTP hydrolysis are modulated by numerous regulatory proteins. Signaling is mediated via effector proteins, such as adenylate cyclase. Inhibits adenylate cyclase activity of ADCY1, ADCY5 and ADCY6, leading to decreased intracellular cAMP levels. The inactive GDP-bound form prevents the association of RGS14 with centrosomes and is required for the translocation of RGS14 from the cytoplasm to the plasma membrane. Required for normal cytokinesis during mitosis. Required for cortical dynein-dynactin complex recruitment during metaphase. This chain is Guanine nucleotide-binding protein G(i) subunit alpha-1 (GNAI1), found in Pongo abelii (Sumatran orangutan).